Consider the following 242-residue polypeptide: Ferritin, mitochondrial (242 aa).

A mitochondrion-targeting transit peptide spans 1 to 49; the sequence is MLSCFRLLSRHISPSLASLRPVRCCFALPLRWAPGRPLDPRQIAPRRPL. Low complexity predominate over residues 47–58; the sequence is RPLAAAASSRDP. Residues 47 to 71 form a disordered region; sequence RPLAAAASSRDPTGPAAGPSRVRQN. Residues 70 to 219 form the Ferritin-like diiron domain; that stretch reads QNFHPDSEAA…DHVHNLVKMG (150 aa). Fe cation contacts are provided by Glu87, Glu122, His125, Glu167, and Gln201.

It belongs to the ferritin family. Homooligomer of 24 subunits. The functional molecule is roughly spherical and contains a central cavity into which the polymeric mineral iron core is deposited. As to expression, detected in testis and erythroleukemia. Expression is very low or not detectable in brain, colon, heart, kidney, liver, lung, muscle, placental, spleen and small intestine.

It is found in the mitochondrion. The enzyme catalyses 4 Fe(2+) + O2 + 4 H(+) = 4 Fe(3+) + 2 H2O. Its function is as follows. Catalyzes the oxidation of ferrous iron(II) to ferric iron(III) and stores iron in a soluble, non-toxic, readily available form. Important for iron homeostasis. Iron is taken up in the ferrous form and deposited as ferric hydroxides after oxidation. This chain is Ferritin, mitochondrial, found in Homo sapiens (Human).